The primary structure comprises 1378 residues: DNA-directed RNA polymerase subunit beta' (1378 aa).

The Zn(2+) site is built by cysteine 69, cysteine 71, cysteine 84, and cysteine 87. The Mg(2+) site is built by aspartate 460, aspartate 462, and aspartate 464. Zn(2+) is bound by residues cysteine 808, cysteine 882, cysteine 889, and cysteine 892.

It belongs to the RNA polymerase beta' chain family. In terms of assembly, the RNAP catalytic core consists of 2 alpha, 1 beta, 1 beta' and 1 omega subunit. When a sigma factor is associated with the core the holoenzyme is formed, which can initiate transcription. Requires Mg(2+) as cofactor. It depends on Zn(2+) as a cofactor.

It carries out the reaction RNA(n) + a ribonucleoside 5'-triphosphate = RNA(n+1) + diphosphate. In terms of biological role, DNA-dependent RNA polymerase catalyzes the transcription of DNA into RNA using the four ribonucleoside triphosphates as substrates. In Rickettsia canadensis (strain McKiel), this protein is DNA-directed RNA polymerase subunit beta'.